A 412-amino-acid polypeptide reads, in one-letter code: P-selectin glycoprotein ligand 1 (412 aa).

A signal peptide spans 1–17 (MPLQLLLLLILLGPGNS). Residues 18–41 (LQLWDTWADEAEKALGPLLARDRR) constitute a propeptide that is removed on maturation. Over 18-320 (LQLWDTWADE…APDHISVKQC (303 aa)) the chain is Extracellular. Q42 bears the Pyrrolidone carboxylic acid mark. Y46, Y48, and Y51 each carry sulfotyrosine. The interval 56–95 (ETEPPEMLRNSTDTTPLTGPGTPESTTVEPAARRSTGLDA) is disordered. T57 is a glycosylation site (O-linked (GalNAc...) threonine). The N-linked (GlcNAc...) asparagine glycan is linked to N65. A compositionally biased stretch (low complexity) spans 66–82 (STDTTPLTGPGTPESTT). N111 is a glycosylation site (N-linked (GlcNAc...) asparagine). 12 consecutive repeat copies span residues 122 to 131 (QTTQPAATEA), 132 to 141 (QTTQPVPTEA), 142 to 151 (QTTPLAATEA), 162 to 171 (QTTPLAATEA), 182 to 191 (QTTQPTGLEA), 192 to 201 (QTTAPAAMEA), 202 to 211 (QTTAPAAMEA), 212 to 221 (QTTPPAAMEA), 222 to 231 (QTTQTTAMEA), 232 to 241 (QTTAPEATEA), 242 to 251 (QTTQPTATEA), and 252 to 261 (QTTPLAAMEA). A 12 X 10 AA tandem repeats region spans residues 122–261 (QTTQPAATEA…QTTPLAAMEA (140 aa)). Disordered stretches follow at residues 125 to 146 (QPAA…TTPL) and 166 to 252 (LAAT…TEAQ). A glycan (N-linked (GlcNAc...) asparagine) is linked at N302. A helical transmembrane segment spans residues 321-341 (LLAILILALVATIFFVCTVVL). Over 342–412 (AVRLSRKGHM…DDLTLHSFLP (71 aa)) the chain is Cytoplasmic. The tract at residues 374 to 412 (EGPSATANGGLSKAKSPGLTPEPREDREGDDLTLHSFLP) is disordered. Residues 395-406 (EPREDREGDDLT) are compositionally biased toward basic and acidic residues. Position 406 is a phosphothreonine (T406). The residue at position 409 (S409) is a Phosphoserine.

Homodimer; disulfide-linked. Interaction with P-, E- and L-selectins, through their lectin/EGF domains, is required for promoting recruitment and rolling of leukocytes. These interactions require sialyl Lewis X glycan modification but there is a differing dependence for tyrosine sulfations. Sulfation on Tyr-51 of PSGL1 is most important for high affinity L-selectin/SELL binding while P-selectin/SELP requires sulfation on Tyr-48. E-selectin/SELE binds with much lower affinity and requires the sLe(x) epitope, but apparently not tyrosine sulfation. Dimerization appears not to be required for P-selectin/SELP binding. Interacts with SNX20. Interacts with MSN and SYK; mediates the activation of SYK by SELPLG. Interacts with HAVCR1. In terms of assembly, (Microbial infection) Interacts with enterovirus 71 capsid proteins. As to quaternary structure, (Microbial infection) Interacts with Staphylococcus aureus proteins SSL5 and SSL11; these interactions prevent SELPLG-mediated neutrophil rolling. Displays complex, core-2, sialylated and fucosylated O-linked oligosaccharides, at least some of which appear to contain poly-N-acetyllactosamine with varying degrees of substitution. Mainly disialylated or neutral forms of the core-2 tetrasaccharide, Galbeta1--&gt;4GlcNAcbeta1--&gt;6(Galbeta1--&gt;3)GalNAcOH. The GlcN:GalN ratio is approximately 2:1 and the Man:Fuc ratio 3:5. Contains about 14% fucose with alpha-1,3 linkage present in two forms: One species is a disialylated, monofucosylated glycan, and the other, a monosialylated, trifucosylated glycan with a polylactosamine backbone. The fucosylated forms carry the Lewis antigen and are important for interaction with selectins and for functioning in leukocyte rolling. The modification containing the sialyl Lewis X glycan is on Thr-57. No sulfated O-glycans. Some N-glycosylation. In terms of processing, sulfation, in conjunction with the SLe(x)-containing glycan, is necessary for P- and L-selectin binding. High affinity P-selectin binding has a preferred requirement for the isomer sulfated on both Tyr-48 and Tyr-51, whereas L-selectin binding requires predominantly sulfation on Tyr-51 with sulfation on Tyr-48 playing only a minor role. These sulfations play an important role in L- and P-selectin-mediated neutrophil recruitment, and leukocyte rolling. As to expression, expressed on neutrophils, monocytes and most lymphocytes.

Its subcellular location is the membrane. In terms of biological role, a SLe(x)-type proteoglycan, which through high affinity, calcium-dependent interactions with E-, P- and L-selectins, mediates rapid rolling of leukocytes over vascular surfaces during the initial steps in inflammation. Critical for the initial leukocyte capture. Functionally, (Microbial infection) Acts as a receptor for enterovirus 71. This chain is P-selectin glycoprotein ligand 1 (SELPLG), found in Homo sapiens (Human).